A 334-amino-acid chain; its full sequence is Beta-ketoacyl-[acyl-carrier-protein] synthase III (334 aa).

Catalysis depends on residues Cys-114 and His-260. Positions 261–265 are ACP-binding; sequence QANLR. The active site involves Asn-290.

This sequence belongs to the thiolase-like superfamily. FabH family. In terms of assembly, homodimer.

The protein resides in the cytoplasm. It carries out the reaction malonyl-[ACP] + acetyl-CoA + H(+) = 3-oxobutanoyl-[ACP] + CO2 + CoA. Its pathway is lipid metabolism; fatty acid biosynthesis. Catalyzes the condensation reaction of fatty acid synthesis by the addition to an acyl acceptor of two carbons from malonyl-ACP. Catalyzes the first condensation reaction which initiates fatty acid synthesis and may therefore play a role in governing the total rate of fatty acid production. Possesses both acetoacetyl-ACP synthase and acetyl transacylase activities. Its substrate specificity determines the biosynthesis of branched-chain and/or straight-chain of fatty acids. This is Beta-ketoacyl-[acyl-carrier-protein] synthase III from Clostridium tetani (strain Massachusetts / E88).